Here is a 480-residue protein sequence, read N- to C-terminus: Trigger factor (480 aa).

In terms of domain architecture, PPIase FKBP-type spans 161–249; the sequence is GDRLLITGKF…VVEVLKEQLP (89 aa). A disordered region spans residues 426 to 480; the sequence is TEEPVEKEAEEKNEEFAIDHEVLPTKDHDAIPAAKYDDNTPKGAETEDKQEKDKD. Positions 429–480 are enriched in basic and acidic residues; the sequence is PVEKEAEEKNEEFAIDHEVLPTKDHDAIPAAKYDDNTPKGAETEDKQEKDKD.

It belongs to the FKBP-type PPIase family. Tig subfamily.

It localises to the cytoplasm. It catalyses the reaction [protein]-peptidylproline (omega=180) = [protein]-peptidylproline (omega=0). Involved in protein export. Acts as a chaperone by maintaining the newly synthesized protein in an open conformation. Functions as a peptidyl-prolyl cis-trans isomerase. This Rhodopirellula baltica (strain DSM 10527 / NCIMB 13988 / SH1) protein is Trigger factor.